A 515-amino-acid polypeptide reads, in one-letter code: Histidine ammonia-lyase (515 aa).

A cross-link (5-imidazolinone (Ala-Gly)) is located at residues 142–144; sequence ASG. Ser-143 carries the 2,3-didehydroalanine (Ser) modification.

Belongs to the PAL/histidase family. In terms of processing, contains an active site 4-methylidene-imidazol-5-one (MIO), which is formed autocatalytically by cyclization and dehydration of residues Ala-Ser-Gly.

Its subcellular location is the cytoplasm. It catalyses the reaction L-histidine = trans-urocanate + NH4(+). Its pathway is amino-acid degradation; L-histidine degradation into L-glutamate; N-formimidoyl-L-glutamate from L-histidine: step 1/3. This chain is Histidine ammonia-lyase, found in Bradyrhizobium sp. (strain BTAi1 / ATCC BAA-1182).